The primary structure comprises 630 residues: Probable potassium transport system protein Kup (630 aa).

The next 12 membrane-spanning stretches (helical) occupy residues 17-37 (LAIA…LYSL), 51-71 (PSAI…VVGI), 105-125 (ITGL…GDAV), 144-164 (PQLS…LFWI), 175-195 (LFGP…IYHI), 218-238 (VLLA…AEAL), 255-275 (YVLV…LLLL), 283-303 (PFFL…STVA), 344-364 (IYVP…VIGF), 374-394 (YGIA…VVMV), 402-422 (LLVA…FGAN), and 428-448 (QGGW…MTWY).

The protein belongs to the HAK/KUP transporter (TC 2.A.72) family.

Its subcellular location is the cell inner membrane. It catalyses the reaction K(+)(in) + H(+)(in) = K(+)(out) + H(+)(out). Transport of potassium into the cell. Likely operates as a K(+):H(+) symporter. In Burkholderia pseudomallei (strain K96243), this protein is Probable potassium transport system protein Kup.